The following is a 267-amino-acid chain: 5'-nucleotidase SurE (267 aa).

The a divalent metal cation site is built by D9, D10, S40, and N97.

Belongs to the SurE nucleotidase family. Requires a divalent metal cation as cofactor.

Its subcellular location is the cytoplasm. It catalyses the reaction a ribonucleoside 5'-phosphate + H2O = a ribonucleoside + phosphate. In terms of biological role, nucleotidase that shows phosphatase activity on nucleoside 5'-monophosphates. The protein is 5'-nucleotidase SurE of Helicobacter pylori (strain HPAG1).